The following is a 404-amino-acid chain: Cysteine desulfurase IscS (404 aa).

Pyridoxal 5'-phosphate is bound by residues 75-76, asparagine 155, glutamine 183, and 203-205; these read AT and SSH. Lysine 206 is modified (N6-(pyridoxal phosphate)lysine). Threonine 243 is a binding site for pyridoxal 5'-phosphate. Residue cysteine 328 is the Cysteine persulfide intermediate of the active site. Cysteine 328 contacts [2Fe-2S] cluster.

The protein belongs to the class-V pyridoxal-phosphate-dependent aminotransferase family. NifS/IscS subfamily. As to quaternary structure, homodimer. Forms a heterotetramer with IscU, interacts with other sulfur acceptors. Requires pyridoxal 5'-phosphate as cofactor.

It localises to the cytoplasm. The enzyme catalyses (sulfur carrier)-H + L-cysteine = (sulfur carrier)-SH + L-alanine. Its pathway is cofactor biosynthesis; iron-sulfur cluster biosynthesis. Master enzyme that delivers sulfur to a number of partners involved in Fe-S cluster assembly, tRNA modification or cofactor biosynthesis. Catalyzes the removal of elemental sulfur atoms from cysteine to produce alanine. Functions as a sulfur delivery protein for Fe-S cluster synthesis onto IscU, an Fe-S scaffold assembly protein, as well as other S acceptor proteins. This Histophilus somni (strain 2336) (Haemophilus somnus) protein is Cysteine desulfurase IscS.